We begin with the raw amino-acid sequence, 222 residues long: uncharacterized protein (222 aa).

A coiled-coil region spans residues Ser43–Ile73.

This is an uncharacterized protein from Rickettsia conorii (strain ATCC VR-613 / Malish 7).